We begin with the raw amino-acid sequence, 441 residues long: Keratin, type I cytoskeletal 15 (441 aa).

Residues 2–91 (LLLGHASTST…GGSDLLLGTS (90 aa)) form a head region. A coil 1A region spans residues 92-127 (GKEAMQNLNDRLASYLDKVRSLEGKNHELELKIKDW). The 316-residue stretch at 92-407 (GKEAMQNLND…MLLDSEDSKG (316 aa)) folds into the IF rod domain. A linker 1 region spans residues 128–149 (YSQVIPGTGGPDARDYGHLEKE). A coil 1B region spans residues 150 to 241 (IEDLQNKVNN…KNHEEDMKAA (92 aa)). Residues 242 to 261 (SSGIAGQVNVELDAAPGTNL) form a linker 12 region. The segment at 262 to 403 (LDELDACRRD…ATYRMLLDSE (142 aa)) is coil 2. A tail region spans residues 404–441 (DSKGSIINHKILTAIEKLVDGIVLSTEVLEKQIPVLSY).

This sequence belongs to the intermediate filament family. Heterotetramer of two type I and two type II keratins. As to expression, expressed in skin.

The sequence is that of Keratin, type I cytoskeletal 15 (KRT15) from Protopterus aethiopicus (Marbled lungfish).